Here is a 237-residue protein sequence, read N- to C-terminus: Ribosomal RNA small subunit methyltransferase G (237 aa).

S-adenosyl-L-methionine is bound by residues Gly78, Phe83, 129 to 130 (AE), and Arg148. Residues 218–237 (KKETPRKYPRKAGTPNKKPL) are disordered.

This sequence belongs to the methyltransferase superfamily. RNA methyltransferase RsmG family.

It is found in the cytoplasm. In terms of biological role, specifically methylates the N7 position of a guanine in 16S rRNA. In Streptococcus uberis (strain ATCC BAA-854 / 0140J), this protein is Ribosomal RNA small subunit methyltransferase G.